The following is a 465-amino-acid chain: Protein unc-93 homolog A (465 aa).

Transmembrane regions (helical) follow at residues valine 8–leucine 28, valine 40–isoleucine 60, isoleucine 71–alanine 91, threonine 96–serine 118, and isoleucine 140–phenylalanine 160. Asparagine 183 and asparagine 189 each carry an N-linked (GlcNAc...) asparagine glycan. The helical transmembrane segment at threonine 200 to leucine 220 threads the bilayer. Residue asparagine 237 is glycosylated (N-linked (GlcNAc...) asparagine). A run of 5 helical transmembrane segments spans residues leucine 256–glutamate 276, tyrosine 281–serine 301, isoleucine 319–tryptophan 339, proline 343–tryptophan 363, and isoleucine 410–valine 427.

Belongs to the unc-93 family.

Its subcellular location is the membrane. The protein is Protein unc-93 homolog A (unc93a) of Danio rerio (Zebrafish).